Consider the following 557-residue polypeptide: Urocanate hydratase (557 aa).

Residues glycine 52–glycine 53, glutamine 130, glycine 176–glycine 178, glutamate 196, arginine 201, asparagine 242–alanine 243, glutamine 263–histidine 267, tyrosine 273–leucine 274, and tyrosine 322 each bind NAD(+). Residue cysteine 410 is part of the active site. Residue glycine 492 coordinates NAD(+).

This sequence belongs to the urocanase family. NAD(+) serves as cofactor.

It is found in the cytoplasm. The catalysed reaction is 4-imidazolone-5-propanoate = trans-urocanate + H2O. The protein operates within amino-acid degradation; L-histidine degradation into L-glutamate; N-formimidoyl-L-glutamate from L-histidine: step 2/3. Functionally, catalyzes the conversion of urocanate to 4-imidazolone-5-propionate. In Allorhizobium ampelinum (strain ATCC BAA-846 / DSM 112012 / S4) (Agrobacterium vitis (strain S4)), this protein is Urocanate hydratase.